The primary structure comprises 315 residues: MAQPRIGQTVVVDVPATTANIGPGFDCLGAALDLNNRFTMRRIEGDGERFELIIEGQEGSHLRGGAENLVYRAAQRVWKAAGEEPVALEARVRLAVPPARGLGSSATAIVAGLVGANALVGEPLSKEKLLELAIDIEGHPDNVVPSLLGGLCMTAKAASQRWRVVRCEWMHSVKAVVAIPAIRLSTSEARRAMPKTVPVGDAVVNLGALTLLLQGLRTGNGDLIADGMHDRLHEPYRWRLIKGGQEVRQAALEAGAWGCAISGAGPSILALCSEDKGPGISQAMVRAWESVGVASRAPLLNLQTTGSHWQPWDAG.

97-107 (PPARGLGSSAT) lines the ATP pocket.

This sequence belongs to the GHMP kinase family. Homoserine kinase subfamily.

It is found in the cytoplasm. The catalysed reaction is L-homoserine + ATP = O-phospho-L-homoserine + ADP + H(+). The protein operates within amino-acid biosynthesis; L-threonine biosynthesis; L-threonine from L-aspartate: step 4/5. Its function is as follows. Catalyzes the ATP-dependent phosphorylation of L-homoserine to L-homoserine phosphate. This Synechococcus sp. (strain WH7803) protein is Homoserine kinase.